We begin with the raw amino-acid sequence, 544 residues long: Inward rectifier potassium channel irk-1 (544 aa).

Topologically, residues 1 to 109 are cytoplasmic; the sequence is MTLSVPDCAE…IFTTMIDVKW (109 aa). A helical membrane pass occupies residues 110 to 134; that stretch reads RWMLMLFASAFVLSWSIFGTTYYLI. The Extracellular segment spans residues 135-158; sequence ALVHGDLSLPTPVNHTACVMNLDS. Residues 159 to 170 constitute an intramembrane region (helical; Pore-forming); the sequence is VYSSFLFAVETH. The pore-forming intramembrane region spans 171 to 177; the sequence is HTIGYGH. A Selectivity filter motif is present at residues 172-177; that stretch reads TIGYGH. Residues 178-186 are Extracellular-facing; that stretch reads RYITTECYL. The helical transmembrane segment at 187–208 threads the bilayer; it reads AGAIVCLQAICALLLQSFMVGI. Over 209-544 the chain is Cytoplasmic; sequence VFAKMARPKK…PIHIEIVSET (336 aa). Disordered stretches follow at residues 411–448 and 512–533; these read HKLEDNRSSDSTPLPSPSPYSYPSTPLNHFQSSSNSPV and LSDLEEECSDSGSPTKCQSPPV. Positions 438-448 are enriched in polar residues; that stretch reads NHFQSSSNSPV.

It belongs to the inward rectifier-type potassium channel (TC 1.A.2.1) family. As to expression, expressed in neurons in the head and tail with no expression detected in non-neuronal cells in these regions. Also detected in the egg-laying system of adult hermaphordites with strong expression in the HSN motor neurons and weak expression in vulval muscles.

It localises to the membrane. The protein localises to the perikaryon. The protein resides in the cell projection. Inward rectifier potassium channels are characterized by a greater tendency to allow potassium to flow into the cell rather than out of it. Required for modulation of the activity of the hermaphrodite-specific neurons (HSNs) by the G-protein coupled neuropeptide receptor egl-6 which in turn controls egg-laying behavior. The polypeptide is Inward rectifier potassium channel irk-1 (irk-1) (Caenorhabditis elegans).